Here is a 248-residue protein sequence, read N- to C-terminus: Mannose-binding protein C (248 aa).

Residues 1-20 form the signal peptide; sequence MSLIPSLSLLLMSMVAASYS. Residues 42-99 form the Collagen-like domain; it reads GINGFPGKDGRDGTKGEKGEPGQGLRGLQGPPGKLGPPGNPGPSGSPGPKGQKGDPGN. Positions 43–110 are disordered; that stretch reads INGFPGKDGR…PDCDSSLAVS (68 aa). The residue at position 47 (proline 47) is a 4-hydroxyproline. The span at 49–61 shows a compositional bias: basic and acidic residues; the sequence is KDGRDGTKGEKGE. Residues proline 73, proline 79, proline 82, and proline 88 each carry the 4-hydroxyproline modification. Residues 75 to 87 show a composition bias toward pro residues; that stretch reads KLGPPGNPGPSGS. The stretch at 112–130 forms a coiled coil; that stretch reads RKALQTEMARIKKWLTFSL. Residues 134–245 enclose the C-type lectin domain; the sequence is VGNKFFLTNG…CSSSHLAVCE (112 aa). Intrachain disulfides connect cysteine 155–cysteine 244 and cysteine 222–cysteine 236.

As to quaternary structure, oligomeric complex of 3 or more homotrimers. Interacts with MASP1 and MASP2. Interacts with MEP1A and MEP1B and may inhibit their catalytic activity. In terms of processing, hydroxylation on proline residues within the sequence motif, GXPG, is most likely to be 4-hydroxy as this fits the requirement for 4-hydroxylation in vertebrates.

The protein resides in the secreted. Calcium-dependent lectin involved in innate immune defense. Binds mannose, fucose and N-acetylglucosamine on different microorganisms and activates the lectin complement pathway. Binds to late apoptotic cells, as well as to apoptotic blebs and to necrotic cells, but not to early apoptotic cells, facilitating their uptake by macrophages. The polypeptide is Mannose-binding protein C (MBL2) (Nomascus concolor (Black crested gibbon)).